The following is a 672-amino-acid chain: Spermatid perinuclear RNA-binding protein (672 aa).

The DZF domain occupies 5–363; it reads RSFANDDRHV…ALKRPFEDGL (359 aa). Disordered stretches follow at residues 52–73 and 349–371; these read TNKG…GENY and GAGS…DPNK. A compositionally biased stretch (basic and acidic residues) spans 357–371; sequence RPFEDGLGDDKDPNK. The DRBM 1 domain maps to 387–453; the sequence is DLMNALMRLN…AVKVLQAMGY (67 aa). A compositionally biased stretch (basic and acidic residues) spans 466–476; that stretch reads SDEKSDNESKN. The tract at residues 466-499 is disordered; it reads SDEKSDNESKNETVSSNSSNNTGNSTTETSSTLE. Residues 477 to 497 are compositionally biased toward low complexity; the sequence is ETVSSNSSNNTGNSTTETSST. The DRBM 2 domain occupies 510 to 576; sequence SGKNPVMELN…ALAALEKLFS (67 aa). Asymmetric dimethylarginine occurs at positions 612 and 617.

Interacts with EIF2AK2. Associates with microtubules; it is unsure whether such interaction is direct or indirect.

It is found in the cytoplasm. In terms of biological role, involved in spermatogenesis and sperm function. Plays a role in regulation of cell growth. Binds to double-stranded DNA and RNA. Binds most efficiently to poly(I:C) RNA than to poly(dI:dC) DNA. Binds also to single-stranded poly(G) RNA. Binds non-specifically to the mRNA PRM1 3'-UTR and adenovirus VA RNA. The protein is Spermatid perinuclear RNA-binding protein (STRBP) of Pongo abelii (Sumatran orangutan).